Consider the following 918-residue polypeptide: Band 3 anion exchange protein (918 aa).

The interval 1-48 is disordered; that stretch reads MENDLSFGEDVMSYEEESDSAFPSPIRPTPPGHSGNYDLEQSRQEEDS. At 1–392 the chain is on the cytoplasmic side; that stretch reads MENDLSFGED…ISDFTDALDP (392 aa). Residues 393 to 416 traverse the membrane as a helical segment; the sequence is QVLAAVIFIYFAALSPAITFGGLL. Topologically, residues 417-424 are extracellular; that stretch reads ADKTEHMM. The helical transmembrane segment at 425–445 threads the bilayer; that stretch reads GVSELMISTCVQGIIFAFIAA. Residues 446–448 lie on the Cytoplasmic side of the membrane; sequence QPT. A discontinuously helical transmembrane segment spans residues 449–465; it reads LVIGFSGPLLVFEEAFF. Residues 466 to 474 are Extracellular-facing; that stretch reads AFCKSQEIE. Residues 475–495 traverse the membrane as a helical segment; that stretch reads YIVGRIWVGLWLVIIVVVIVA. At 496 to 507 the chain is on the cytoplasmic side; the sequence is VEGSFLVKFISR. The helical transmembrane segment at 508 to 530 threads the bilayer; that stretch reads FTQEIFSILISLIFIYETFSKLG. The Extracellular portion of the chain corresponds to 531–583; sequence KIFKAHPLVLNYEHLNDSLDNPFHPVVKEHIEYHEDGNKTVHEVIHERAYPNT. 2 N-linked (GlcNAc...) asparagine glycosylation sites follow: Asn-546 and Asn-568. The chain crosses the membrane as a helical span at residues 584-604; sequence ALLSMCLMFGCFFIAYFLRQF. The Cytoplasmic portion of the chain corresponds to 605–615; it reads KNGHFLPGPIR. The helical transmembrane segment at 616–636 threads the bilayer; it reads RMIGDFGVPIAIFFMIAVDIT. Over 637–676 the chain is Extracellular; the sequence is IEDAYTQKLVVPKGLMVSNPNARGWFINPLGEKKPFPAWM. Residues 677–697 traverse the membrane as a helical segment; sequence MGACCVPALLVFILIFLESQI. The Cytoplasmic portion of the chain corresponds to 698–713; that stretch reads TTLIVSKPERKMVKGS. A helical transmembrane segment spans residues 714–732; sequence GFHLDLLILVTMGGIASLF. Residues 733-750 traverse the membrane as a discontinuously helical segment; it reads GVPWLSAATVRSVTHANA. Topologically, residues 751 to 769 are cytoplasmic; sequence LTVMSKGPKPEIEKVLEQR. The next 2 membrane-spanning stretches (helical) occupy residues 770 to 790 and 791 to 809; these read ISGMLVAAMVGVSILLEPILK and MIPMTALFGIFLYMGITSL. At 810-847 the chain is on the cytoplasmic side; the sequence is SGIQMWDRMLLLIVPRKYYPADAYAQRVTTMKMHLFTL. Residues 848 to 878 constitute an intramembrane region (discontinuously helical); the sequence is IQMVCLGALWMVKMSAFSLALPFVLILTIPL. Cys-852 carries S-palmitoyl cysteine lipidation. The Cytoplasmic portion of the chain corresponds to 879–918; sequence RMAITGTLFTDKEMKCLDASDGKVKFEEEPGEDMYESPLP.

It belongs to the anion exchanger (TC 2.A.31) family. A dimer in solution, it spans the membrane asymmetrically and appears to be tetrameric.

It is found in the cell membrane. It catalyses the reaction hydrogencarbonate(in) + chloride(out) = hydrogencarbonate(out) + chloride(in). Its function is as follows. Functions both as a transporter that mediates electroneutral anion exchange across the cell membrane and as a structural protein. Major integral membrane glycoprotein of the erythrocyte membrane; required for normal flexibility and stability of the erythrocyte membrane and for normal erythrocyte shape via the interactions of its cytoplasmic domain with cytoskeletal proteins, glycolytic enzymes, and hemoglobin. Functions as a transporter that mediates the 1:1 exchange of inorganic anions across the erythrocyte membrane. Mediates chloride-bicarbonate exchange in the kidney, and is required for normal acidification of the urine. This chain is Band 3 anion exchange protein (slc4a1), found in Oncorhynchus mykiss (Rainbow trout).